The chain runs to 151 residues: Large ribosomal subunit protein bL9 (151 aa).

This sequence belongs to the bacterial ribosomal protein bL9 family.

Its function is as follows. Binds to the 23S rRNA. The chain is Large ribosomal subunit protein bL9 from Chloroherpeton thalassium (strain ATCC 35110 / GB-78).